A 594-amino-acid chain; its full sequence is Ferredoxin--nitrite reductase, chloroplastic (594 aa).

The transit peptide at 1–32 directs the protein to the chloroplast; sequence MASLPVNKIIPSSTTLLSSSNNNRRRNNSSIR. Residues 13 to 22 show a composition bias toward low complexity; that stretch reads STTLLSSSNN. Residues 13-36 are disordered; that stretch reads STTLLSSSNNNRRRNNSSIRCQKA. The [4Fe-4S] cluster site is built by Cys473, Cys479, Cys514, and Cys518. Residue Cys518 coordinates siroheme.

Belongs to the nitrite and sulfite reductase 4Fe-4S domain family. Monomer. Requires siroheme as cofactor. It depends on [4Fe-4S] cluster as a cofactor.

It localises to the plastid. Its subcellular location is the chloroplast. The catalysed reaction is 6 oxidized [2Fe-2S]-[ferredoxin] + NH4(+) + 2 H2O = nitrite + 6 reduced [2Fe-2S]-[ferredoxin] + 8 H(+). It participates in nitrogen metabolism; nitrate reduction (assimilation). The chain is Ferredoxin--nitrite reductase, chloroplastic (NIR) from Spinacia oleracea (Spinach).